We begin with the raw amino-acid sequence, 509 residues long: MSVSALSPTRFADSLSGFLQVASVLGLLLLLVKAVQFYLHRQWLLKAFQQFPSPPFHWFFGHEKFKGDQELQEIVSCIENFPSAFPRWFWGSKAYLTVYDPDYMKVILGRSDPKANGAYRLLAPWIGYGLLLLNGQPWFQHRRMLTPAFHYDILKPYVKNMADSIRLMLDKWERLADQDSSIEIFQHISLMTLDTVMKCAFSHKGSVQVDGNYRTYLQAIGDLNNLFHSRVRNIFHQNDTIYKLSSNGRLAKQACQLAHDHTDGVIKLRKDQLQDEGELEKIKKKRRLDFLDILLFARMENGDSMSDKDLRAEVDTFMFEGHDTTASGVSWIFYALATHPDHQQRCREEVQSLLGDGSSITWDHLDQIPYTTMCIKEALRLYPPVPGIVRELSTSVTFPDGRSLPKGVQVTLSIYGLHHNPKVWPNPEVFDPSRFAPDSPRHSHSFLPFSGGARNCIGKQFAMSELKVIVALTLLRFELLPDPTRVPMPLARLVLKSKNGIYLHLKKLH.

A run of 2 helical transmembrane segments spans residues 15 to 35 and 121 to 141; these read LSGF…VKAV and LLAP…WFQH. Glu320 is a binding site for heme. A Phosphoserine modification is found at Ser439. Cys456 provides a ligand contact to heme.

It belongs to the cytochrome P450 family. Requires heme as cofactor. As to expression, highly expressed in the kidneys of both genders.

It is found in the endoplasmic reticulum membrane. Its subcellular location is the microsome membrane. It carries out the reaction an omega-methyl-long-chain fatty acid + reduced [NADPH--hemoprotein reductase] + O2 = an omega-hydroxy-long-chain fatty acid + oxidized [NADPH--hemoprotein reductase] + H2O + H(+). The catalysed reaction is dodecanoate + reduced [NADPH--hemoprotein reductase] + O2 = 12-hydroxydodecanoate + oxidized [NADPH--hemoprotein reductase] + H2O + H(+). It catalyses the reaction dodecanoate + reduced [NADPH--hemoprotein reductase] + O2 = 11-hydroxydodecanoate + oxidized [NADPH--hemoprotein reductase] + H2O + H(+). The enzyme catalyses tetradecanoate + reduced [NADPH--hemoprotein reductase] + O2 = 14-hydroxytetradecanoate + oxidized [NADPH--hemoprotein reductase] + H2O + H(+). It carries out the reaction hexadecanoate + reduced [NADPH--hemoprotein reductase] + O2 = 16-hydroxyhexadecanoate + oxidized [NADPH--hemoprotein reductase] + H2O + H(+). The catalysed reaction is (9Z)-octadecenoate + reduced [NADPH--hemoprotein reductase] + O2 = 18-hydroxy-(9Z)-octadecenoate + oxidized [NADPH--hemoprotein reductase] + H2O + H(+). It catalyses the reaction (9Z,12Z)-octadecadienoate + reduced [NADPH--hemoprotein reductase] + O2 = 18-hydroxy-(9Z,12Z)-octadecadienoate + oxidized [NADPH--hemoprotein reductase] + H2O + H(+). The enzyme catalyses (9Z,12Z)-octadecadienoate + reduced [NADPH--hemoprotein reductase] + O2 = 17-hydroxy-(9Z,12Z)-octadecadienoate + oxidized [NADPH--hemoprotein reductase] + H2O + H(+). It carries out the reaction (5Z,8Z,11Z,14Z)-eicosatetraenoate + reduced [NADPH--hemoprotein reductase] + O2 = 20-hydroxy-(5Z,8Z,11Z,14Z)-eicosatetraenoate + oxidized [NADPH--hemoprotein reductase] + H2O + H(+). The catalysed reaction is 8,9-epoxy-(5Z,11Z,14Z)-eicosatrienoate + reduced [NADPH--hemoprotein reductase] + O2 = 20-hydroxy-8,9-epoxy-(5Z,11Z,14Z)-eicosatrienoate + oxidized [NADPH--hemoprotein reductase] + H2O + H(+). In terms of biological role, a cytochrome P450 monooxygenase involved in the metabolism of fatty acids. Catalyzes predominantly the oxidation of the terminal carbon (omega-oxidation) of long-chain fatty acids. Acts as a major omega-hydroxylase for dodecanoic (lauric) acid in liver. In kidney, may play an important role in omega-hydroxylation of (5Z,8Z,11Z,14Z)-eicosatetraenoic acid (arachidonate) to 20-hydroxyeicosatetraenoic acid (20-HETE), a signaling molecule acting both as vasoconstrictive and natriuretic with overall effect on arterial blood pressure. Also participates in the formation of anti-inflammatory hydroxyepoxyeicosatrienoic acids (HEETs) in kidney by converting 8,9-epoxyeicosatrienoic acid (EET) to 20,8,9-HEET, an activator of PPARA. Displays substantially lower fatty acid omega-1 hydroxylase activity. Mechanistically, uses molecular oxygen inserting one oxygen atom into a substrate, and reducing the second into a water molecule, with two electrons provided by NADPH via cytochrome P450 reductase (CPR; NADPH-ferrihemoprotein reductase). The polypeptide is Cytochrome P450 4A10 (Mus musculus (Mouse)).